We begin with the raw amino-acid sequence, 275 residues long: Polyamine aminopropyltransferase (275 aa).

The PABS domain occupies 2–235; it reads EFWFTEKQTE…GMWTFTIGSK (234 aa). Gln-31 serves as a coordination point for S-methyl-5'-thioadenosine. Residues His-62 and Asp-86 each coordinate spermidine. S-methyl-5'-thioadenosine-binding positions include Asp-106 and 137–138; that span reads DG. The active-site Proton acceptor is Asp-155. Position 155–158 (155–158) interacts with spermidine; it reads DSTE. Pro-162 lines the S-methyl-5'-thioadenosine pocket.

The protein belongs to the spermidine/spermine synthase family. As to quaternary structure, homodimer or homotetramer.

Its subcellular location is the cytoplasm. It carries out the reaction S-adenosyl 3-(methylsulfanyl)propylamine + putrescine = S-methyl-5'-thioadenosine + spermidine + H(+). It participates in amine and polyamine biosynthesis; spermidine biosynthesis; spermidine from putrescine: step 1/1. Its function is as follows. Catalyzes the irreversible transfer of a propylamine group from the amino donor S-adenosylmethioninamine (decarboxy-AdoMet) to putrescine (1,4-diaminobutane) to yield spermidine. In Shouchella clausii (strain KSM-K16) (Alkalihalobacillus clausii), this protein is Polyamine aminopropyltransferase.